We begin with the raw amino-acid sequence, 159 residues long: uncharacterized protein (159 aa).

2 disordered regions span residues 1 to 29 (MHQT…TSES) and 114 to 159 (TRGG…NENT). A compositionally biased stretch (polar residues) spans 15–29 (SFSNESPTSRETSES).

This is an uncharacterized protein from Homo sapiens (Human).